The sequence spans 79 residues: Large ribosomal subunit protein uL29 (79 aa).

This sequence belongs to the universal ribosomal protein uL29 family.

The polypeptide is Large ribosomal subunit protein uL29 (Gluconacetobacter diazotrophicus (strain ATCC 49037 / DSM 5601 / CCUG 37298 / CIP 103539 / LMG 7603 / PAl5)).